Consider the following 194-residue polypeptide: Protein PHLOEM PROTEIN 2-LIKE A2 (194 aa).

A helical membrane pass occupies residues Val49–Ser71.

In terms of tissue distribution, vascular tissues, specifically in phloem companion cell-sieve element complexes.

It localises to the membrane. This Arabidopsis thaliana (Mouse-ear cress) protein is Protein PHLOEM PROTEIN 2-LIKE A2 (PP2A2).